Consider the following 230-residue polypeptide: Probable fimbrial chaperone SfmC (230 aa).

Positions 1–23 are cleaved as a signal peptide; the sequence is MMTKIKLLMLIIFYLIISASAHA.

This sequence belongs to the periplasmic pilus chaperone family.

The protein resides in the periplasm. In terms of biological role, part of the sfmACDHF fimbrial operon. Could contribute to adhesion to various surfaces in specific environmental niches. Increases adhesion to eukaryotic T24 bladder epithelial cells in the absence of fim genes. The chain is Probable fimbrial chaperone SfmC (sfmC) from Escherichia coli (strain K12).